A 560-amino-acid chain; its full sequence is Ribonuclease J 1 (560 aa).

His76, His78, Asp80, His81, His144, and Asp166 together coordinate Zn(2+). 366-370 (HTSGH) provides a ligand contact to substrate. His392 provides a ligand contact to Zn(2+).

The protein belongs to the metallo-beta-lactamase superfamily. RNA-metabolizing metallo-beta-lactamase-like family. Bacterial RNase J subfamily. In terms of assembly, homodimer, may be a subunit of the RNA degradosome. It depends on Zn(2+) as a cofactor.

It is found in the cytoplasm. An RNase that has 5'-3' exonuclease and possibly endonuclease activity. Involved in maturation of rRNA and in some organisms also mRNA maturation and/or decay. Has an overlapping but not completely redundant role with RNase J2 in the decay of mRNA. This chain is Ribonuclease J 1, found in Streptococcus pyogenes serotype M3 (strain ATCC BAA-595 / MGAS315).